Reading from the N-terminus, the 157-residue chain is SsrA-binding protein (157 aa).

Residues A138–R151 are compositionally biased toward basic and acidic residues. A disordered region spans residues A138 to S157.

Belongs to the SmpB family.

The protein resides in the cytoplasm. Functionally, required for rescue of stalled ribosomes mediated by trans-translation. Binds to transfer-messenger RNA (tmRNA), required for stable association of tmRNA with ribosomes. tmRNA and SmpB together mimic tRNA shape, replacing the anticodon stem-loop with SmpB. tmRNA is encoded by the ssrA gene; the 2 termini fold to resemble tRNA(Ala) and it encodes a 'tag peptide', a short internal open reading frame. During trans-translation Ala-aminoacylated tmRNA acts like a tRNA, entering the A-site of stalled ribosomes, displacing the stalled mRNA. The ribosome then switches to translate the ORF on the tmRNA; the nascent peptide is terminated with the 'tag peptide' encoded by the tmRNA and targeted for degradation. The ribosome is freed to recommence translation, which seems to be the essential function of trans-translation. In Cereibacter sphaeroides (strain ATCC 17025 / ATH 2.4.3) (Rhodobacter sphaeroides), this protein is SsrA-binding protein.